Consider the following 432-residue polypeptide: Adenylosuccinate synthetase (432 aa).

Residues Gly13–Lys19 and Gly41–Thr43 each bind GTP. Catalysis depends on Asp14, which acts as the Proton acceptor. Asp14 and Gly41 together coordinate Mg(2+). IMP-binding positions include Asp14 to Lys17, Asn39 to His42, Thr130, Arg144, Gln225, Thr240, and Arg304. His42 (proton donor) is an active-site residue. Ala300–Arg306 lines the substrate pocket. GTP contacts are provided by residues Arg306, Lys332–Asp334, and Ser415–Gly417.

The protein belongs to the adenylosuccinate synthetase family. Homodimer. Mg(2+) serves as cofactor.

Its subcellular location is the cytoplasm. The catalysed reaction is IMP + L-aspartate + GTP = N(6)-(1,2-dicarboxyethyl)-AMP + GDP + phosphate + 2 H(+). It participates in purine metabolism; AMP biosynthesis via de novo pathway; AMP from IMP: step 1/2. Its function is as follows. Plays an important role in the de novo pathway of purine nucleotide biosynthesis. Catalyzes the first committed step in the biosynthesis of AMP from IMP. The sequence is that of Adenylosuccinate synthetase from Vibrio cholerae serotype O1 (strain M66-2).